The following is a 278-amino-acid chain: MTVLHSVDFFPSGHSPVAIEPRLPQAAFPEHHHDFHEIVIVEHGTGIHVFNGQPYTISGGTVCFVRDHDRHMYEHTDNLCLTNVLYRSPDAFQFLSGLNQLLPQEKDGHYPSHWRVNQSTLQQVRQLVTQMEQAEENTESHALASRELTFMQLLVLLRRSSLVEGLENNDARLNQLMAWLEDHFAEEVSWETVADVFSLSLRTLHRQLKQHTGLTPQRYLNRLRLIKARHLLRHTDESVTDIAYRCGFGDSNHFSTLFRREFSWSPREIRQGRDASLQ.

The HTH araC/xylS-type domain occupies 174-272 (NQLMAWLEDH…SWSPREIRQG (99 aa)). 2 consecutive DNA-binding regions (H-T-H motif) follow at residues 191–212 (ETVADVFSLSLRTLHRQLKQHT) and 239–262 (VTDIAYRCGFGDSNHFSTLFRREF).

Binds DNA as a dimer.

The protein resides in the cytoplasm. Activates expression of the rhaBAD and rhaT operons. This Enterobacter sp. (strain 638) protein is HTH-type transcriptional activator RhaS.